Consider the following 158-residue polypeptide: Transcription antitermination protein NusB (158 aa).

Positions 1 to 12 (MKRVEKRAEKQG) are enriched in basic and acidic residues. The segment at 1 to 20 (MKRVEKRAEKQGRGTARKSR) is disordered.

The protein belongs to the NusB family.

Functionally, involved in transcription antitermination. Required for transcription of ribosomal RNA (rRNA) genes. Binds specifically to the boxA antiterminator sequence of the ribosomal RNA (rrn) operons. This chain is Transcription antitermination protein NusB, found in Nitrosospira multiformis (strain ATCC 25196 / NCIMB 11849 / C 71).